The sequence spans 258 residues: Isoprenyl transferase 1 (258 aa).

The active site involves D39. D39 provides a ligand contact to Mg(2+). Substrate-binding positions include 40–43 (GNRR), W44, R52, H57, and 85–87 (SND). N88 functions as the Proton acceptor in the catalytic mechanism. Residues R92, R207, and 213-215 (RLS) each bind substrate. E226 lines the Mg(2+) pocket.

The protein belongs to the UPP synthase family. In terms of assembly, homodimer. Mg(2+) is required as a cofactor.

Its function is as follows. Catalyzes the condensation of isopentenyl diphosphate (IPP) with allylic pyrophosphates generating different type of terpenoids. This is Isoprenyl transferase 1 from Tropheryma whipplei (strain TW08/27) (Whipple's bacillus).